Consider the following 1320-residue polypeptide: Phosphoribosylformylglycinamidine synthase (1320 aa).

ATP-binding positions include 310–321 (GAATGSGGEIRD) and A686. Mg(2+)-binding residues include D687, E726, N730, and D894. ATP is bound at residue S896. The region spanning 1067–1320 (VAILREQGVN…MFRNARAFIG (254 aa)) is the Glutamine amidotransferase type-1 domain. C1160 (nucleophile) is an active-site residue. Catalysis depends on residues H1285 and E1287.

It in the N-terminal section; belongs to the FGAMS family. In terms of assembly, monomer.

The protein resides in the cytoplasm. It carries out the reaction N(2)-formyl-N(1)-(5-phospho-beta-D-ribosyl)glycinamide + L-glutamine + ATP + H2O = 2-formamido-N(1)-(5-O-phospho-beta-D-ribosyl)acetamidine + L-glutamate + ADP + phosphate + H(+). The protein operates within purine metabolism; IMP biosynthesis via de novo pathway; 5-amino-1-(5-phospho-D-ribosyl)imidazole from N(2)-formyl-N(1)-(5-phospho-D-ribosyl)glycinamide: step 1/2. Functionally, phosphoribosylformylglycinamidine synthase involved in the purines biosynthetic pathway. Catalyzes the ATP-dependent conversion of formylglycinamide ribonucleotide (FGAR) and glutamine to yield formylglycinamidine ribonucleotide (FGAM) and glutamate. The chain is Phosphoribosylformylglycinamidine synthase from Colwellia psychrerythraea (strain 34H / ATCC BAA-681) (Vibrio psychroerythus).